An 81-amino-acid chain; its full sequence is HssA/B-like protein 5 (81 aa).

The protein belongs to the hssA/B family.

The sequence is that of HssA/B-like protein 5 (hssl5) from Dictyostelium discoideum (Social amoeba).